A 205-amino-acid polypeptide reads, in one-letter code: MDDAPGASDEAREPLLKRVGASVEGTSLMNHRLMKNPKFRALLVESLMALTTFSFMAKQTEGLAGPELSTLNDCGEAGCGFTKFYQFKGVVGVYAGFWAYTVILIAMYVIRKAPPPGTEFASYALFTAAMATFVVMSITECASVVLSSDYYVCKNADYSLVSLIFAAATIVLNCLTCAFAWRQWGELKFVGLPKTLSALTETYPG.

At 1-38 (MDDAPGASDEAREPLLKRVGASVEGTSLMNHRLMKNPK) the chain is on the cytoplasmic side. A helical transmembrane segment spans residues 39-57 (FRALLVESLMALTTFSFMA). Residues 58 to 89 (KQTEGLAGPELSTLNDCGEAGCGFTKFYQFKG) lie on the Extracellular side of the membrane. The chain crosses the membrane as a helical span at residues 90–110 (VVGVYAGFWAYTVILIAMYVI). Topologically, residues 111-124 (RKAPPPGTEFASYA) are cytoplasmic. A helical membrane pass occupies residues 125–145 (LFTAAMATFVVMSITECASVV). The Extracellular portion of the chain corresponds to 146–159 (LSSDYYVCKNADYS). A helical transmembrane segment spans residues 160 to 180 (LVSLIFAAATIVLNCLTCAFA). Residues 181–205 (WRQWGELKFVGLPKTLSALTETYPG) are Cytoplasmic-facing.

The protein belongs to the Casparian strip membrane proteins (CASP) family. In terms of assembly, homodimer and heterodimers.

The protein localises to the cell membrane. In Ostreococcus lucimarinus (strain CCE9901), this protein is CASP-like protein 0U1.